Reading from the N-terminus, the 192-residue chain is 7-methyl-GTP pyrophosphatase (192 aa).

Asp-69 (proton acceptor) is an active-site residue.

It belongs to the Maf family. YceF subfamily. Requires a divalent metal cation as cofactor.

The protein localises to the cytoplasm. It catalyses the reaction N(7)-methyl-GTP + H2O = N(7)-methyl-GMP + diphosphate + H(+). Its function is as follows. Nucleoside triphosphate pyrophosphatase that hydrolyzes 7-methyl-GTP (m(7)GTP). May have a dual role in cell division arrest and in preventing the incorporation of modified nucleotides into cellular nucleic acids. The polypeptide is 7-methyl-GTP pyrophosphatase (Methylobacillus flagellatus (strain ATCC 51484 / DSM 6875 / VKM B-1610 / KT)).